A 158-amino-acid polypeptide reads, in one-letter code: Transcriptional repressor NrdR (158 aa).

A zinc finger spans residues 3 to 34 (CPSCQNTDSRVLESRAADAGRSVRRRRECLHC). The ATP-cone domain maps to 49 to 139 (ITVLKRNGNR…VYRDFRGVND (91 aa)).

This sequence belongs to the NrdR family. Requires Zn(2+) as cofactor.

Its function is as follows. Negatively regulates transcription of bacterial ribonucleotide reductase nrd genes and operons by binding to NrdR-boxes. The sequence is that of Transcriptional repressor NrdR from Prochlorococcus marinus (strain MIT 9313).